The primary structure comprises 1001 residues: Serine/threonine-protein kinase TAO1-B (1001 aa).

A Protein kinase domain is found at 28–281 (FSDLREIGHG…SDELLKHMFV (254 aa)). ATP contacts are provided by residues 34–42 (IGHGSFGAV) and K57. Residue D151 is the Proton acceptor of the active site. Disordered stretches follow at residues 324–435 (PAVE…YRNR) and 567–586 (KEEL…EWLS). Residues 350–370 (SNQSIPSMSISASSQSSSVNS) show a composition bias toward low complexity. Composition is skewed to basic and acidic residues over residues 375-388 (SDDK…EGDH) and 577-586 (PKKEKQEWLS). Coiled-coil stretches lie at residues 458 to 651 (SELR…EHAM) and 754 to 877 (KAVL…EIEA). Residues 911–1001 (SHNPTGGPGP…ISNGSHMSYT (91 aa)) are disordered. The span at 921-930 (HWGHPMAGPP) shows a compositional bias: low complexity. Polar residues-rich tracts occupy residues 949 to 967 (GSVQ…NSPQ) and 975 to 1001 (GGRT…MSYT).

The protein belongs to the protein kinase superfamily. STE Ser/Thr protein kinase family. STE20 subfamily.

Its subcellular location is the cytoplasm. The catalysed reaction is L-seryl-[protein] + ATP = O-phospho-L-seryl-[protein] + ADP + H(+). It catalyses the reaction L-threonyl-[protein] + ATP = O-phospho-L-threonyl-[protein] + ADP + H(+). Functionally, serine/threonine-protein kinase involved in various processes such as p38/mapk14 stress-activated MAPK cascade, DNA damage response and regulation of cytoskeleton stability. Acts as an activator of the p38/MAPK14 stress-activated MAPK cascade by mediating phosphorylation and subsequent activation of upstream MAP kinase kinases. In response to DNA damage, involved in the G2/M transition DNA damage checkpoint by activating the p38/MAPK14 stress-activated MAPK cascade. This Xenopus laevis (African clawed frog) protein is Serine/threonine-protein kinase TAO1-B (taok1-b).